Consider the following 182-residue polypeptide: UPF0397 protein VV2_1534 (182 aa).

5 helical membrane passes run 8–28, 41–61, 72–92, 110–130, and 146–166; these read VVVI…MFGI, AVLA…VGFI, WGVW…IGLF, FSLF…CSAF, and QLTI…YFIL.

This sequence belongs to the UPF0397 family.

The protein localises to the cell membrane. The protein is UPF0397 protein VV2_1534 of Vibrio vulnificus (strain CMCP6).